We begin with the raw amino-acid sequence, 240 residues long: 1-(5-phosphoribosyl)-5-[(5-phosphoribosylamino)methylideneamino] imidazole-4-carboxamide isomerase (240 aa).

Residue aspartate 8 is the Proton acceptor of the active site. Aspartate 129 serves as the catalytic Proton donor.

The protein belongs to the HisA/HisF family.

The protein resides in the cytoplasm. The catalysed reaction is 1-(5-phospho-beta-D-ribosyl)-5-[(5-phospho-beta-D-ribosylamino)methylideneamino]imidazole-4-carboxamide = 5-[(5-phospho-1-deoxy-D-ribulos-1-ylimino)methylamino]-1-(5-phospho-beta-D-ribosyl)imidazole-4-carboxamide. Its pathway is amino-acid biosynthesis; L-histidine biosynthesis; L-histidine from 5-phospho-alpha-D-ribose 1-diphosphate: step 4/9. This chain is 1-(5-phosphoribosyl)-5-[(5-phosphoribosylamino)methylideneamino] imidazole-4-carboxamide isomerase, found in Clostridium beijerinckii (strain ATCC 51743 / NCIMB 8052) (Clostridium acetobutylicum).